A 143-amino-acid chain; its full sequence is Sirohydrochlorin cobaltochelatase (143 aa).

H18 functions as the Proton acceptor in the catalytic mechanism. H18 contacts Co(2+). H18 contacts Ni(2+). Substrate contacts are provided by residues R53 and 78–83 (LAHGVH). Residue H83 participates in Co(2+) binding. H83 is a binding site for Ni(2+).

Belongs to the CbiX family. CbiXS subfamily. As to quaternary structure, homotetramer; dimer of dimers.

The catalysed reaction is Co-sirohydrochlorin + 2 H(+) = sirohydrochlorin + Co(2+). It catalyses the reaction Ni-sirohydrochlorin + 2 H(+) = sirohydrochlorin + Ni(2+). It participates in cofactor biosynthesis; adenosylcobalamin biosynthesis; cob(II)yrinate a,c-diamide from sirohydrochlorin (anaerobic route): step 1/10. Its function is as follows. Catalyzes the insertion of Co(2+) into sirohydrochlorin as part of the anaerobic pathway to cobalamin biosynthesis. Involved in the biosynthesis of the unique nickel-containing tetrapyrrole coenzyme F430, the prosthetic group of methyl-coenzyme M reductase (MCR), which plays a key role in methanogenesis and anaerobic methane oxidation (Potential). Catalyzes the insertion of Ni(2+) into sirohydrochlorin to yield Ni-sirohydrochlorin (Potential). This Methanothermobacter thermautotrophicus (strain ATCC 29096 / DSM 1053 / JCM 10044 / NBRC 100330 / Delta H) (Methanobacterium thermoautotrophicum) protein is Sirohydrochlorin cobaltochelatase.